The following is a 305-amino-acid chain: HTH-type transcriptional regulator KdgR (305 aa).

The 62-residue stretch at 55 to 116 (VSSVLKVFGI…GESEKYSLTL (62 aa)) folds into the HTH iclR-type domain. Positions 76-95 (ITELSQRVMMSKSTVYRFLQ) form a DNA-binding region, H-T-H motif. Positions 131 to 300 (LIRSADIQMR…ARNISDQMGY (170 aa)) constitute an IclR-ED domain.

Homodimer.

The protein localises to the cytoplasm. Functionally, transcriptional repressor that negatively regulates the expression of genes involved in pectinolysis and in pectinase secretion. Controls genes involved in pectin catabolism, including the pectinase genes (pelA, pelB, pelC, pelE), genes involved in pectin catabolism (kdgT, ogl, kduI-kdgF) and the outT gene involved in pectinase secretion. Acts by binding directly to KdgR binding sites (KdgR-box) in the gene operator/promoter region. The chain is HTH-type transcriptional regulator KdgR from Dickeya chrysanthemi (Pectobacterium chrysanthemi).